The sequence spans 414 residues: UDP-N-acetylglucosamine 1-carboxyvinyltransferase (414 aa).

Phosphoenolpyruvate is bound at residue 19-20 (KN). Residue arginine 89 participates in UDP-N-acetyl-alpha-D-glucosamine binding. Cysteine 113 functions as the Proton donor in the catalytic mechanism. A 2-(S-cysteinyl)pyruvic acid O-phosphothioketal modification is found at cysteine 113. UDP-N-acetyl-alpha-D-glucosamine contacts are provided by residues 118-122 (RPIDL), aspartate 301, and valine 323.

This sequence belongs to the EPSP synthase family. MurA subfamily.

Its subcellular location is the cytoplasm. It catalyses the reaction phosphoenolpyruvate + UDP-N-acetyl-alpha-D-glucosamine = UDP-N-acetyl-3-O-(1-carboxyvinyl)-alpha-D-glucosamine + phosphate. It functions in the pathway cell wall biogenesis; peptidoglycan biosynthesis. Its function is as follows. Cell wall formation. Adds enolpyruvyl to UDP-N-acetylglucosamine. This Bdellovibrio bacteriovorus (strain ATCC 15356 / DSM 50701 / NCIMB 9529 / HD100) protein is UDP-N-acetylglucosamine 1-carboxyvinyltransferase.